We begin with the raw amino-acid sequence, 659 residues long: UvrABC system protein B (659 aa).

The region spanning 25–182 is the Helicase ATP-binding domain; it reads QSIENGNRGQ…KKLIEIQYER (158 aa). Position 38-45 (38-45) interacts with ATP; that stretch reads GVTGSGKT. Residues 91–114 carry the Beta-hairpin motif; that stretch reads YYDYYQPEAYVPQTDTFIEKDASI. In terms of domain architecture, Helicase C-terminal spans 429–582; the sequence is QIDDLYGEIQ…QMEYNEEHNI (154 aa). The region spanning 622 to 657 is the UVR domain; it reads EKLIEQYEEEMKEAAKNLQFERAAELRDIIKDLKEN.

It belongs to the UvrB family. Forms a heterotetramer with UvrA during the search for lesions. Interacts with UvrC in an incision complex.

It is found in the cytoplasm. Functionally, the UvrABC repair system catalyzes the recognition and processing of DNA lesions. A damage recognition complex composed of 2 UvrA and 2 UvrB subunits scans DNA for abnormalities. Upon binding of the UvrA(2)B(2) complex to a putative damaged site, the DNA wraps around one UvrB monomer. DNA wrap is dependent on ATP binding by UvrB and probably causes local melting of the DNA helix, facilitating insertion of UvrB beta-hairpin between the DNA strands. Then UvrB probes one DNA strand for the presence of a lesion. If a lesion is found the UvrA subunits dissociate and the UvrB-DNA preincision complex is formed. This complex is subsequently bound by UvrC and the second UvrB is released. If no lesion is found, the DNA wraps around the other UvrB subunit that will check the other stand for damage. The protein is UvrABC system protein B of Clostridium perfringens (strain ATCC 13124 / DSM 756 / JCM 1290 / NCIMB 6125 / NCTC 8237 / Type A).